Reading from the N-terminus, the 384-residue chain is MTIEPLNLVRIRRQFHESPELALKEFQTHALLLSVIRSLPQNLLEIKTIPELPTALLVRVAGSHPHRTIGYRADIDALPVNEKTGLDFASKTPGIMHACGHDIHMTVALGILEYFANHQPQDNLIFFFQPAEESHSGSVRAFNANIFTNQFRPNEFYGLHSTPTLPAGVIGCRMGTLFAGTTEVNLKLTGKGGHAAYPQDANDMVVAQAYLITQLQTIVARNVNPIEGGVLTLGKVSAGNVRNVIADQAVIEGTIRGLTQKMILLIQQRVQQICEGTAQAFNCQVEVKMNQGGYLPVENDPTLTHELIQFMQSDSAIKFKKTPPAMTGEDFGFLLSKFPGTMFWLGVGATSSLHSATFNPDERAIQLGIDAVIKFLQNRMSKGA.

D74 is a catalytic residue. The Proton acceptor role is filled by E133.

It belongs to the peptidase M20A family. N-acetyldiaminopimelate deacetylase subfamily.

The catalysed reaction is N-acetyl-(2S,6S)-2,6-diaminopimelate + H2O = (2S,6S)-2,6-diaminopimelate + acetate. Its pathway is amino-acid biosynthesis; L-lysine biosynthesis via DAP pathway; LL-2,6-diaminopimelate from (S)-tetrahydrodipicolinate (acetylase route): step 3/3. Catalyzes the conversion of N-acetyl-diaminopimelate to diaminopimelate and acetate. In Pediococcus pentosaceus (strain ATCC 25745 / CCUG 21536 / LMG 10740 / 183-1w), this protein is N-acetyldiaminopimelate deacetylase.